Reading from the N-terminus, the 469-residue chain is Alpha,alpha-trehalose-phosphate synthase [UDP-forming] (469 aa).

2 residues coordinate D-glucose 6-phosphate: Y87 and D141. Residues R279 and K284 each coordinate UDP. The UDP-alpha-D-glucose site is built by R279 and K284. Residue R317 coordinates D-glucose 6-phosphate. 378-386 (DGMNLVSYE) contacts UDP-alpha-D-glucose. Residue 382-386 (LVSYE) participates in UDP binding.

The protein belongs to the glycosyltransferase 20 family.

The catalysed reaction is D-glucose 6-phosphate + UDP-alpha-D-glucose = alpha,alpha-trehalose 6-phosphate + UDP + H(+). It participates in carbohydrate biosynthesis. Synthase catalytic subunit of the trehalose synthase complex that catalyzes the production of trehalose from glucose-6-phosphate and UDP-alpha-D-glucose in a two step process. The disaccharide trehalose serves as a storage carbohydrate that is mobilized during spore germination. The protein is Alpha,alpha-trehalose-phosphate synthase [UDP-forming] of Yarrowia lipolytica (strain CLIB 122 / E 150) (Yeast).